The following is a 551-amino-acid chain: CTP synthase (551 aa).

The amidoligase domain stretch occupies residues methionine 1–tryptophan 267. Position 13 (serine 13) interacts with CTP. Serine 13 serves as a coordination point for UTP. ATP is bound at residue serine 14–isoleucine 19. Tyrosine 54 is an L-glutamine binding site. Aspartate 71 is an ATP binding site. Mg(2+) is bound by residues aspartate 71 and glutamate 141. CTP is bound by residues aspartate 148 to glutamate 150, lysine 188 to glutamine 193, and lysine 224. UTP is bound by residues lysine 188–glutamine 193 and lysine 224. The Glutamine amidotransferase type-1 domain maps to arginine 292–glutamate 532. Glycine 353 lines the L-glutamine pocket. Cysteine 380 (nucleophile; for glutamine hydrolysis) is an active-site residue. L-glutamine contacts are provided by residues tyrosine 381–histidine 384, glutamate 404, and arginine 460. Residues histidine 505 and glutamate 507 contribute to the active site.

Belongs to the CTP synthase family. As to quaternary structure, homotetramer.

The enzyme catalyses UTP + L-glutamine + ATP + H2O = CTP + L-glutamate + ADP + phosphate + 2 H(+). It catalyses the reaction L-glutamine + H2O = L-glutamate + NH4(+). It carries out the reaction UTP + NH4(+) + ATP = CTP + ADP + phosphate + 2 H(+). It functions in the pathway pyrimidine metabolism; CTP biosynthesis via de novo pathway; CTP from UDP: step 2/2. With respect to regulation, allosterically activated by GTP, when glutamine is the substrate; GTP has no effect on the reaction when ammonia is the substrate. The allosteric effector GTP functions by stabilizing the protein conformation that binds the tetrahedral intermediate(s) formed during glutamine hydrolysis. Inhibited by the product CTP, via allosteric rather than competitive inhibition. Functionally, catalyzes the ATP-dependent amination of UTP to CTP with either L-glutamine or ammonia as the source of nitrogen. Regulates intracellular CTP levels through interactions with the four ribonucleotide triphosphates. The chain is CTP synthase from Thermomicrobium roseum (strain ATCC 27502 / DSM 5159 / P-2).